An 80-amino-acid polypeptide reads, in one-letter code: U20-ctenitoxin-Pn1a (80 aa).

7 cysteine pairs are disulfide-bonded: Cys-3-Cys-20, Cys-10-Cys-26, Cys-17-Cys-52, Cys-19-Cys-40, Cys-28-Cys-38, Cys-58-Cys-71, and Cys-75-Cys-80.

In terms of tissue distribution, expressed by the venom gland.

The protein resides in the secreted. In terms of biological role, omega-agatoxin are antagonists of voltage-gated calcium channels (Cav). Induces rapid general flaccid paralysis followed by death when injected into the cerebral ventricle of mice at dose levels of 3 ug per mouse. The protein is U20-ctenitoxin-Pn1a of Phoneutria nigriventer (Brazilian armed spider).